A 448-amino-acid polypeptide reads, in one-letter code: Probable glycine dehydrogenase (decarboxylating) subunit 1 (448 aa).

The protein belongs to the GcvP family. N-terminal subunit subfamily. As to quaternary structure, the glycine cleavage system is composed of four proteins: P, T, L and H. In this organism, the P 'protein' is a heterodimer of two subunits.

The catalysed reaction is N(6)-[(R)-lipoyl]-L-lysyl-[glycine-cleavage complex H protein] + glycine + H(+) = N(6)-[(R)-S(8)-aminomethyldihydrolipoyl]-L-lysyl-[glycine-cleavage complex H protein] + CO2. Its function is as follows. The glycine cleavage system catalyzes the degradation of glycine. The P protein binds the alpha-amino group of glycine through its pyridoxal phosphate cofactor; CO(2) is released and the remaining methylamine moiety is then transferred to the lipoamide cofactor of the H protein. This chain is Probable glycine dehydrogenase (decarboxylating) subunit 1, found in Listeria monocytogenes serotype 4a (strain HCC23).